Here is an 86-residue protein sequence, read N- to C-terminus: Small ribosomal subunit protein bS20 (86 aa).

The interval 1-27 (MANSKSAKKRAIQAEKRRQHNASRRSM) is disordered.

This sequence belongs to the bacterial ribosomal protein bS20 family.

Binds directly to 16S ribosomal RNA. In Vibrio atlanticus (strain LGP32) (Vibrio splendidus (strain Mel32)), this protein is Small ribosomal subunit protein bS20.